Consider the following 279-residue polypeptide: NADPH-dependent 7-cyano-7-deazaguanine reductase (279 aa).

86–88 (IES) contributes to the substrate binding site. Position 88-89 (88-89 (SK)) interacts with NADPH. Cys187 (thioimide intermediate) is an active-site residue. Residue Asp194 is the Proton donor of the active site. 226–227 (HE) is a binding site for substrate. 255-256 (RG) provides a ligand contact to NADPH.

The protein belongs to the GTP cyclohydrolase I family. QueF type 2 subfamily. In terms of assembly, homodimer.

It is found in the cytoplasm. The enzyme catalyses 7-aminomethyl-7-carbaguanine + 2 NADP(+) = 7-cyano-7-deazaguanine + 2 NADPH + 3 H(+). It participates in tRNA modification; tRNA-queuosine biosynthesis. In terms of biological role, catalyzes the NADPH-dependent reduction of 7-cyano-7-deazaguanine (preQ0) to 7-aminomethyl-7-deazaguanine (preQ1). The protein is NADPH-dependent 7-cyano-7-deazaguanine reductase of Glaesserella parasuis serovar 5 (strain SH0165) (Haemophilus parasuis).